The following is a 162-amino-acid chain: Ribose-5-phosphate isomerase B (162 aa).

D-ribulose 5-phosphate is bound by residues 11–12 and 70–74; these read DH and GSGNG. Glu-75 functions as the Proton acceptor in the catalytic mechanism. His-102 acts as the Proton donor in catalysis. D-ribulose 5-phosphate-binding residues include Asn-103, Arg-113, Arg-137, and Arg-141.

Belongs to the LacAB/RpiB family. As to quaternary structure, homodimer.

It catalyses the reaction aldehydo-D-ribose 5-phosphate = D-ribulose 5-phosphate. The protein operates within carbohydrate degradation; pentose phosphate pathway; D-ribose 5-phosphate from D-ribulose 5-phosphate (non-oxidative stage): step 1/1. Its function is as follows. Catalyzes the interconversion of ribulose-5-P and ribose-5-P. The chain is Ribose-5-phosphate isomerase B from Mycobacterium bovis (strain ATCC BAA-935 / AF2122/97).